The sequence spans 360 residues: NAD(P)H-quinone oxidoreductase subunit 1, chloroplastic (360 aa).

9 helical membrane-spanning segments follow: residues 27–47, 98–118, 129–149, 165–185, 203–223, 248–268, 269–289, 297–317, and 340–360; these read IWIF…VLVI, FSIG…VIPF, IGIF…LMSG, AAQS…ISLL, FWGW…ISSL, YSGI…LISS, LFVT…ISIL, IFGT…FLFI, and FLLP…LFSL.

The protein belongs to the complex I subunit 1 family. As to quaternary structure, NDH is composed of at least 16 different subunits, 5 of which are encoded in the nucleus.

It is found in the plastid. It localises to the chloroplast thylakoid membrane. The catalysed reaction is a plastoquinone + NADH + (n+1) H(+)(in) = a plastoquinol + NAD(+) + n H(+)(out). It carries out the reaction a plastoquinone + NADPH + (n+1) H(+)(in) = a plastoquinol + NADP(+) + n H(+)(out). NDH shuttles electrons from NAD(P)H:plastoquinone, via FMN and iron-sulfur (Fe-S) centers, to quinones in the photosynthetic chain and possibly in a chloroplast respiratory chain. The immediate electron acceptor for the enzyme in this species is believed to be plastoquinone. Couples the redox reaction to proton translocation, and thus conserves the redox energy in a proton gradient. In Nasturtium officinale (Watercress), this protein is NAD(P)H-quinone oxidoreductase subunit 1, chloroplastic.